The chain runs to 260 residues: Hemin import ATP-binding protein HmuV (260 aa).

Positions 3-239 constitute an ABC transporter domain; that stretch reads LHAQQISLSI…QRLSEVYGCD (237 aa). Position 35–42 (35–42) interacts with ATP; it reads GPNGSGKS.

It belongs to the ABC transporter superfamily. Heme (hemin) importer (TC 3.A.1.14.5) family. The complex is composed of two ATP-binding proteins (HmuV), two transmembrane proteins (HmuU) and a solute-binding protein (HmuT).

The protein localises to the cell inner membrane. Functionally, part of the ABC transporter complex HmuTUV involved in hemin import. Responsible for energy coupling to the transport system. The chain is Hemin import ATP-binding protein HmuV from Ruegeria sp. (strain TM1040) (Silicibacter sp.).